A 237-amino-acid polypeptide reads, in one-letter code: Demethylmenaquinone methyltransferase (237 aa).

S-adenosyl-L-methionine is bound by residues T58, D79, and 106 to 107 (NA).

This sequence belongs to the class I-like SAM-binding methyltransferase superfamily. MenG/UbiE family.

The enzyme catalyses a 2-demethylmenaquinol + S-adenosyl-L-methionine = a menaquinol + S-adenosyl-L-homocysteine + H(+). It functions in the pathway quinol/quinone metabolism; menaquinone biosynthesis; menaquinol from 1,4-dihydroxy-2-naphthoate: step 2/2. Its function is as follows. Methyltransferase required for the conversion of demethylmenaquinol (DMKH2) to menaquinol (MKH2). This is Demethylmenaquinone methyltransferase from Bacillus cereus (strain ATCC 10987 / NRS 248).